Here is a 188-residue protein sequence, read N- to C-terminus: MAAKLIVGLGNPGPKYSWTRHNAGFMVLDRLASLSGIQVTRKAFSGLSGDGNWSSERVYLLKPQTFMNLSGRSVAEALRFYKLSLSDLIVIHDDLDIPFGKVKLKEGGGHGGHNGLRSLAQELGSSAYARIRVGIGRPVHGDVVNFVLTNFAKEEMDSLLEVLDTSVDALEMMIKEGMPKAMSIFNAR.

Tyr16 contacts tRNA. His21 functions as the Proton acceptor in the catalytic mechanism. Positions 66, 68, and 114 each coordinate tRNA.

It belongs to the PTH family. As to quaternary structure, monomer.

The protein localises to the cytoplasm. The catalysed reaction is an N-acyl-L-alpha-aminoacyl-tRNA + H2O = an N-acyl-L-amino acid + a tRNA + H(+). Hydrolyzes ribosome-free peptidyl-tRNAs (with 1 or more amino acids incorporated), which drop off the ribosome during protein synthesis, or as a result of ribosome stalling. Functionally, catalyzes the release of premature peptidyl moieties from peptidyl-tRNA molecules trapped in stalled 50S ribosomal subunits, and thus maintains levels of free tRNAs and 50S ribosomes. The sequence is that of Peptidyl-tRNA hydrolase from Citrifermentans bemidjiense (strain ATCC BAA-1014 / DSM 16622 / JCM 12645 / Bem) (Geobacter bemidjiensis).